A 408-amino-acid polypeptide reads, in one-letter code: MKVLVINAGSSSLKYQLIDMTNESALAVGLCERIGIDNSIITQKKFDGKKLEKLTDLPTHKDALEEVVKALTDDEFGVIKDMGEINAVGHRVVHGGEKFTTSALYDEGVEKAIKDCFELAPLHNPPNMMGISACAEIMPGTPMVIVFDTAFHQTMPPYAYMYALPYDLYEKHGVRKYGFHGTSHKYVAERAALMLGKPAEETKIITCHLGNGSSITAVEGGKSVETSMGFTPLEGLAMGTRCGSIDPAIVPFLMEKEGLTTREIDTLMNKKSGVLGVSGLSNDFRDLDEAASKGNRKAELALEIFAYKVKKFIGEYSAVLNGADAVVFTAGIGENSASIRKRILTGLDGIGIKIDDEKNKIRGQEIDISTPDAKVRVFVIPTNEELAIARETKEIVETEVKLRSSIPV.

Mg(2+) is bound at residue Asn-7. Residue Lys-14 participates in ATP binding. Position 91 (Arg-91) interacts with substrate. Asp-148 (proton donor/acceptor) is an active-site residue. ATP contacts are provided by residues 208–212, 283–285, and 331–335; these read HLGNG, DFR, and GIGEN. A Mg(2+)-binding site is contributed by Glu-384.

This sequence belongs to the acetokinase family. In terms of assembly, homodimer. Mg(2+) serves as cofactor. Mn(2+) is required as a cofactor.

The protein resides in the cytoplasm. The catalysed reaction is acetate + ATP = acetyl phosphate + ADP. Its pathway is metabolic intermediate biosynthesis; acetyl-CoA biosynthesis; acetyl-CoA from acetate: step 1/2. Its activity is regulated as follows. Inhibited by diethylpyrocarbonate, hydroxylamine and phenylglyoxal. Functionally, catalyzes the formation of acetyl phosphate from acetate and ATP. Can also catalyze the reverse reaction. Can also phosphorylate propionate, but has very low activity toward butyrate. In Methanosarcina thermophila, this protein is Acetate kinase.